The primary structure comprises 695 residues: Variediene synthase (695 aa).

Positions 1-23 are disordered; sequence MVPTSLSPDDTSDPVPRSSSDIQ. A terpene cyclase region spans residues 7–332; it reads SPDDTSDPVP…PRYHPWLCEE (326 aa). Residue Asp-98 coordinates Mg(2+). Residues Asp-98, 184 to 187, Asn-228, 232 to 236, and 324 to 325 contribute to the substrate site; these read RIID, SFDIE, and RY. Positions 98–102 match the DDXXD 1 motif; that stretch reads DNVVE. The NSE/DTE signature appears at 228–236; it reads NDYFSFDIE. Positions 353-392 are disordered; it reads RRSISGDSISSESSVWSGASDRSARSSVSSAPSLDEGKEP. The span at 357–385 shows a compositional bias: low complexity; sequence SGDSISSESSVWSGASDRSARSSVSSAPS. Isopentenyl diphosphate is bound by residues Lys-415, Arg-418, and His-447. Mg(2+) is bound by residues Asp-454 and Asp-458. The DDXXD 2 signature appears at 454 to 458; that stretch reads DDIED. Arg-463 is a dimethylallyl diphosphate binding site. Arg-464 lines the isopentenyl diphosphate pocket. Lys-541, Thr-542, Gln-579, Asn-586, Lys-595, and Lys-605 together coordinate dimethylallyl diphosphate.

It in the N-terminal section; belongs to the terpene synthase family. In the C-terminal section; belongs to the FPP/GGPP synthase family. As to quaternary structure, hexamer. Mg(2+) is required as a cofactor.

It carries out the reaction isopentenyl diphosphate + (2E,6E)-farnesyl diphosphate = (2E,6E,10E)-geranylgeranyl diphosphate + diphosphate. It catalyses the reaction (2E,6E,10E)-geranylgeranyl diphosphate = variediene + diphosphate. It participates in secondary metabolite biosynthesis; terpenoid biosynthesis. Its function is as follows. Bifunctional terpene synthase converts DMAPP and IPP, and also GGPP, into variediene as a single product. The C-terminal prenyltransferase domain of AbVS catalyzes formation of GGPP, whereas the N-terminal terpene cyclase domain catalyzes the cyclization of GGPP to variediene. This Aspergillus brasiliensis (strain CBS 101740 / IMI 381727 / IBT 21946) protein is Variediene synthase.